Consider the following 797-residue polypeptide: Mitochondrial inner membrane m-AAA protease component AFG3L2 (797 aa).

Residues 1–38 constitute a mitochondrion transit peptide; the sequence is MAHRCLRLWGRGGCWPRGLQQLLVPGGVGPGEQPCLRT. The propeptide at 39–66 is removed in mature form; it reads LYRFVTTQARASRNSLLTDIIAAYQRFC. At 39 to 142 the chain is on the mitochondrial matrix side; the sequence is LYRFVTTQAR…KGDIPWDDKD (104 aa). The segment at 76–126 is disordered; it reads YFPNGKNGKKASEPKEVMGEKKESKPAATTRSSGGGGGGGGKRGGKKDDSH. The segment covering 85 to 100 has biased composition (basic and acidic residues); that stretch reads KASEPKEVMGEKKESK. A compositionally biased stretch (gly residues) spans 108-117; sequence SGGGGGGGGK. At lysine 117 the chain carries N6-succinyllysine. A helical membrane pass occupies residues 143-163; that stretch reads FRMFFLWTALFWGGVMFYLLL. The Mitochondrial intermembrane segment spans residues 164 to 250; the sequence is KRSGREITWK…VPVVYIAESD (87 aa). Residues 251 to 271 form a helical membrane-spanning segment; sequence GSFLLSMLPTVLIIAFLLYTI. Residues 272-797 are Mitochondrial matrix-facing; that stretch reads RRGPAGIGRT…EEPPGEKVAN (526 aa). The ATP site is built by valine 310, alanine 311, threonine 352, glycine 353, lysine 354, threonine 355, leucine 356, and histidine 490. Histidine 574 serves as a coordination point for Zn(2+). The active site involves glutamate 575. Zn(2+) is bound by residues histidine 578 and aspartate 649. Positions 759–797 are disordered; sequence FVEGTGSLDEDTSLPEGLKDWNKEREKEKEEPPGEKVAN. The span at 775-797 shows a compositional bias: basic and acidic residues; it reads GLKDWNKEREKEKEEPPGEKVAN.

This sequence in the N-terminal section; belongs to the AAA ATPase family. In the C-terminal section; belongs to the peptidase M41 family. As to quaternary structure, homohexamer. Forms heterohexamers with SPG7. The m-AAA protease is either composed of homohexamers of AFG3L2 or heterohexamers of AFG3L2 and SPG7. Interacts with MAIP1. Interacts with DNAJC19. Interacts with PHB2. The cofactor is Zn(2+). In terms of processing, upon import into the mitochondrion, the N-terminal transit peptide is cleaved to generate an intermediate form which undergoes autocatalytic proteolytic processing to generate the proteolytically active mature form. As to expression, ubiquitous. Highly expressed in the cerebellar Purkinje cells.

The protein localises to the mitochondrion inner membrane. The catalysed reaction is ATP + H2O = ADP + phosphate + H(+). Functionally, catalytic component of the m-AAA protease, a protease that plays a key role in proteostasis of inner mitochondrial membrane proteins, and which is essential for axonal and neuron development. AFG3L2 possesses both ATPase and protease activities: the ATPase activity is required to unfold substrates, threading them into the internal proteolytic cavity for hydrolysis into small peptide fragments. The m-AAA protease carries out quality control in the inner membrane of the mitochondria by mediating degradation of mistranslated or misfolded polypeptides. The m-AAA protease complex also promotes the processing and maturation of mitochondrial proteins, such as MRPL32/bL32m, PINK1 and SP7. Mediates protein maturation of the mitochondrial ribosomal subunit MRPL32/bL32m by catalyzing the cleavage of the presequence of MRPL32/bL32m prior to assembly into the mitochondrial ribosome. Required for SPG7 maturation into its active mature form after SPG7 cleavage by mitochondrial-processing peptidase (MPP). Required for the maturation of PINK1 into its 52kDa mature form after its cleavage by mitochondrial-processing peptidase (MPP). Acts as a regulator of calcium in neurons by mediating degradation of SMDT1/EMRE before its assembly with the uniporter complex, limiting the availability of SMDT1/EMRE for MCU assembly and promoting efficient assembly of gatekeeper subunits with MCU. Promotes the proteolytic degradation of GHITM upon hyperpolarization of mitochondria: progressive GHITM degradation leads to respiratory complex I degradation and broad reshaping of the mitochondrial proteome by AFG3L2. Also acts as a regulator of mitochondrial glutathione homeostasis by mediating cleavage and degradation of SLC25A39. SLC25A39 cleavage is prevented when SLC25A39 binds iron-sulfur. Involved in the regulation of OMA1-dependent processing of OPA1. May act by mediating processing of OMA1 precursor, participating in OMA1 maturation. This is Mitochondrial inner membrane m-AAA protease component AFG3L2 from Homo sapiens (Human).